A 210-amino-acid polypeptide reads, in one-letter code: Uracil phosphoribosyltransferase (210 aa).

5-phospho-alpha-D-ribose 1-diphosphate-binding positions include Arg-78, Arg-103, and 130-138 (DPMLATGGS). Uracil is bound by residues Ile-195 and 200–202 (GDA). Asp-201 contributes to the 5-phospho-alpha-D-ribose 1-diphosphate binding site.

Belongs to the UPRTase family. It depends on Mg(2+) as a cofactor.

The enzyme catalyses UMP + diphosphate = 5-phospho-alpha-D-ribose 1-diphosphate + uracil. The protein operates within pyrimidine metabolism; UMP biosynthesis via salvage pathway; UMP from uracil: step 1/1. Its activity is regulated as follows. Allosterically activated by GTP. Functionally, catalyzes the conversion of uracil and 5-phospho-alpha-D-ribose 1-diphosphate (PRPP) to UMP and diphosphate. This Leifsonia xyli subsp. xyli (strain CTCB07) protein is Uracil phosphoribosyltransferase.